An 810-amino-acid chain; its full sequence is MTTEKSLVAEAENSQHQQQKEEGEGVTNSGQQETQLEELSQEAAEGDNHCEQKLKTSNGDTPTHEDLTKNKERTSENRGLSRLFSSFLKRPKSQVSEEEGKDVESAKEKCEGGQKEIEFGTSLDEEIILKAPIAAPEPELKTDPSLDLHSLSSAETQPAQEEHREDPDFETKEGGGLEECSKIEVKEESPESKAERELKASQKSIRRHRNMHCKVSLLDDTVYECVVEKHAKGQDLLKRVCEHLNLLEEDYFGLAIWDNGASKTWLDSAKEIKKQVRGVPWNFTFNVKFYPPDPAQLTEDITRYYLCLQLRQDIVSGRLPCSFATLALLGSYTIQSELGDYDPELHGAEYVSDFKLAPNQTKELEEKVMELHKSYRSMTPAQADLEFLENAKKLSMYGVDLHKAKDLEGVDIILGVCSSGLLVYKDKLRINRFPWPKVLKISYKRSSFFIKIRPGEQEQYESTIGFKLPSYRAAKKLWKVCVEHHTFFRLTSTDTLPKSKFLALGSKFRYSGRTQAQTRQASALIDRPAPHFERTASKRASRSLDGAAAVDSDRSPRPTSAPAIAQSQDAEGTVPGAPVKKTVVSKAQKETVKDEEKKEEGPPDQAEPEPTEVWKDLDKSQEEIKKHHASISELKKNFMESVPEPRPSEWDKRLSTHSPFRTLNINGQLPTGEGPPLVKTQTVTISDTANSVKSEIPTKDVPIVHTETKTITYEAAQTDDSNGDLDPGVLLTAQTITSETTSSTTTTQITKTVKGGISETRIEKRIVITGDADIDHDQVLVQAIKEAKEQHPDMSVTKVVVHQETEISEE.

The interval 1-124 (MTTEKSLVAE…KEIEFGTSLD (124 aa)) is disordered. The residue at position 14 (Ser-14) is a Phosphoserine. A Phosphothreonine modification is found at Thr-61. The span at 62–76 (PTHEDLTKNKERTSE) shows a compositional bias: basic and acidic residues. Ser-85, Ser-86, Ser-96, Ser-105, Ser-122, Ser-150, Ser-152, Ser-153, Ser-189, and Ser-192 each carry phosphoserine. Over residues 102–118 (DVESAKEKCEGGQKEIE) the composition is skewed to basic and acidic residues. Residues 152–203 (SSAETQPAQEEHREDPDFETKEGGGLEECSKIEVKEESPESKAERELKASQK) form a disordered region. Basic and acidic residues predominate over residues 160 to 200 (QEEHREDPDFETKEGGGLEECSKIEVKEESPESKAERELKA). Residues 211 to 492 (MHCKVSLLDD…EHHTFFRLTS (282 aa)) enclose the FERM domain. Tyr-223 is modified (phosphotyrosine). Thr-379 is modified (phosphothreonine). The tract at residues 518–613 (TRQASALIDR…DQAEPEPTEV (96 aa)) is disordered. Residues Ser-522, Ser-541, Ser-543, and Ser-555 each carry the phosphoserine modification. Positions 587-601 (AQKETVKDEEKKEEG) are enriched in basic and acidic residues. The tract at residues 615–659 (KDLDKSQEEIKKHHASISELKKNFMESVPEPRPSEWDKRLSTHSP) is spectrin--actin-binding. Phosphoserine occurs at positions 620, 630, 655, and 658. The interval 660-810 (FRTLNINGQL…VHQETEISEE (151 aa)) is C-terminal (CTD). Phosphothreonine occurs at positions 682 and 805.

As to quaternary structure, binds with a high affinity to glycophorin and with lower affinity to band III protein. Associates with the nuclear mitotic apparatus. Binds calmodulin, CPAP and DLG1. Also found to associate with contractile apparatus and tight junctions. Interacts with NUMA1; this interaction is negatively regulated by CDK1 during metaphase and promotes for anaphase-specific localization of NUMA1 in symmetrically dividing cells. Interacts with ATP2B1; regulates small intestinal calcium absorption through regulation of membrane expression of ATP2B1. O-glycosylated; contains N-acetylglucosamine side chains in the C-terminal domain. Post-translationally, phosphorylated at multiple sites by different protein kinases and each phosphorylation event selectively modulates the protein's functions.

It is found in the nucleus. It localises to the cytoplasm. The protein resides in the cytoskeleton. Its subcellular location is the cell cortex. In terms of biological role, protein 4.1 is a major structural element of the erythrocyte membrane skeleton. It plays a key role in regulating membrane physical properties of mechanical stability and deformability by stabilizing spectrin-actin interaction. Recruits DLG1 to membranes. Required for dynein-dynactin complex and NUMA1 recruitment at the mitotic cell cortex during anaphase. This Canis lupus familiaris (Dog) protein is Protein 4.1.